The chain runs to 232 residues: Small ribosomal subunit protein uS2 (232 aa).

Belongs to the universal ribosomal protein uS2 family.

The sequence is that of Small ribosomal subunit protein uS2 from Heliobacterium modesticaldum (strain ATCC 51547 / Ice1).